Here is a 358-residue protein sequence, read N- to C-terminus: MPSTTLSTVLSDINEFVVKQGHGVKGLSELGLQTLPNQYVHPPEERLSSMDVVSDDSIPVIDVSNWEDPKVAKLICDAAEKRGFFQIVNHGIPLEMLEKAKAATYRFFREPAEEKKKYSKENCPTSHVRYSTSFLPQIEKALEWKDHLSMFYVSDEEAAQYWPPSCRDDALEYLKSCEMVSRKLLEALMQGLNVNEIDDAKESLLMGSRRININYYPKCPNPDLTVGVGRHSDISTLTLLLQDDIGGLYVRKLEHEAWSHVPPVKGALVINIGDALQIMSNGRYKSIEHRVLANETNDRISVPVFVNPKPNDIVGPLPEVLASGEKPVYKPVLYSDYAKHFYRKAHNGKDTIAFARIE.

The 102-residue stretch at G207–P308 folds into the Fe2OG dioxygenase domain. A 2-oxoglutarate-binding site is contributed by Y216. 3 residues coordinate Fe cation: H231, D233, and H289. 2 residues coordinate 2-oxoglutarate: R299 and S301.

It belongs to the iron/ascorbate-dependent oxidoreductase family. The cofactor is L-ascorbate. Requires Fe(2+) as cofactor. In terms of tissue distribution, mostly expressed in underground stems and stems, and, at low levels, in tubers, leaves and petioles.

The catalysed reaction is (E)-4-coumaroyl-CoA + 2-oxoglutarate + O2 = (E)-2,4-dihydroxycinnamoyl-CoA + succinate + CO2. It carries out the reaction (E)-feruloyl-CoA + 2-oxoglutarate + O2 = (E)-6-hydroxyferuloyl-CoA + succinate + CO2. The protein operates within phenylpropanoid metabolism. 2-oxoglutarate (OG)- and Fe(II)-dependent dioxygenase (2OGD) involved in scopoletin and umbelliferone biosynthesis. Converts feruloyl CoA into 6'-hydroxyferuloyl CoA, and p-coumaroyl CoA into 2,4-dihydroxycinnamoyl-CoA, but has no activity with caffeoyl-CoA. This chain is Bi-functional coumaroyl CoA and feruloyl CoA ortho-hydroxylase F6H2-1-1, found in Ipomoea batatas (Sweet potato).